A 158-amino-acid polypeptide reads, in one-letter code: Transcription elongation factor GreA (158 aa).

The protein belongs to the GreA/GreB family.

Necessary for efficient RNA polymerase transcription elongation past template-encoded arresting sites. The arresting sites in DNA have the property of trapping a certain fraction of elongating RNA polymerases that pass through, resulting in locked ternary complexes. Cleavage of the nascent transcript by cleavage factors such as GreA or GreB allows the resumption of elongation from the new 3'terminus. GreA releases sequences of 2 to 3 nucleotides. The sequence is that of Transcription elongation factor GreA from Ruthia magnifica subsp. Calyptogena magnifica.